The following is a 138-amino-acid chain: Ribulose bisphosphate carboxylase small subunit (138 aa).

This sequence belongs to the RuBisCO small chain family. In terms of assembly, heterohexadecamer of 8 large and 8 small subunits.

Its subcellular location is the plastid. It localises to the chloroplast. Functionally, ruBisCO catalyzes two reactions: the carboxylation of D-ribulose 1,5-bisphosphate, the primary event in carbon dioxide fixation, as well as the oxidative fragmentation of the pentose substrate in the photorespiration process. Both reactions occur simultaneously and in competition at the same active site. Although the small subunit is not catalytic it is essential for maximal activity. In Pyropia haitanensis (Red seaweed), this protein is Ribulose bisphosphate carboxylase small subunit.